An 853-amino-acid polypeptide reads, in one-letter code: MSTPENFDAHTPMMQQYLKLKAQHPEILLFYRMGDFYELFYDDAKRASQLLDISLTKRGASAGEPIPMAGIPYHAVENYLAKLVNQGESVAICEQIGDPATSKGPVERKVVRIVTPGTISDEALLQERQDNLLAAIWQDSKGFGYATLDISSGRFRLSEPADRETMAAELQRTNPAELLYAEDFAEMSLIEGRRGLRRRPLWEFEIDTARQQLNLQFGTRDLVGFGVENAPRGLCAAGCLLQYAKDTQRTTLPHIRSITMERQQDSIIMDAATRRNLEITQNLAGGAENTLASVLDCTVTPMGSRMLKRWLHMPVRDTRVLLERQQTIGALQDFTAELQPVLRQVGDLERILARLALRTARPRDLARMRHAFQQLPELRAQLENVDSAPVQALREKMGEFAELRDLLERAIIDTPPVLVRDGGVIASGYNEELDEWRALADGATDYLERLEVRERERTGLDTLKVGFNAVHGYYIQISRGQSHLAPINYMRRQTLKNAERYIIPELKEYEDKVLTSKGKALALEKQLYEELFDLLLPHLEALQQSASALAELDVLVNLAERAYTLNYTCPTFIDKPGIRITEGRHPVVEQVLNEPFIANPLNLSPQRRMLIITGPNMGGKSTYMRQTALIALMAYIGSYVPAQKVEIGPIDRIFTRVGAADDLASGRSTFMVEMTETANILHNATEYSLVLMDEIGRGTSTYDGLSLAWACAENLANKIKALTLFATHYFELTQLPEKMEGVANVHLDALEHGDTIAFMHSVQDGAASKSYGLAVAALAGVPKEVIKRARQKLRELESISPNAAATQVDGTQMSLLSVPEETSPAVEALENLDPDSLTPRQALEWIYRLKSLV.

ATP is bound at residue 614 to 621 (GPNMGGKS).

It belongs to the DNA mismatch repair MutS family.

In terms of biological role, this protein is involved in the repair of mismatches in DNA. It is possible that it carries out the mismatch recognition step. This protein has a weak ATPase activity. This Escherichia coli O6:K15:H31 (strain 536 / UPEC) protein is DNA mismatch repair protein MutS.